A 1001-amino-acid polypeptide reads, in one-letter code: E3 ubiquitin-protein ligase etc-1 (1001 aa).

The IQ domain maps to 28-57; sequence QEKAARKVQKFWRGHRVQHNQRLLFRAEFD. The stretch at 66–115 forms a coiled coil; that stretch reads LEETIKMAQLLVNFYETNKDEERLVMTLSELVKLKTSDKEFEKRIRETQR. Residues 658–1001 form the HECT domain; it reads KVNDLKSMVR…INSGAGFELA (344 aa). The active-site Glycyl thioester intermediate is the Cys969.

As to quaternary structure, interacts with ify-1 and cyb-1.

The catalysed reaction is S-ubiquitinyl-[E2 ubiquitin-conjugating enzyme]-L-cysteine + [acceptor protein]-L-lysine = [E2 ubiquitin-conjugating enzyme]-L-cysteine + N(6)-ubiquitinyl-[acceptor protein]-L-lysine.. It functions in the pathway protein modification; protein ubiquitination. In terms of biological role, E3 ubiquitin-protein ligase that accepts ubiquitin from E2 ubiquitin-conjugating enzymes, such as ubc-18, in the form of a thioester and then directly transfers the ubiquitin to targeted substrates. Ubiquitinates ify-1 and cyb-1 targeting them for degradation in post-meiotic embryos. The polypeptide is E3 ubiquitin-protein ligase etc-1 (Caenorhabditis elegans).